The sequence spans 729 residues: Fatty acid oxidation complex subunit alpha (729 aa).

Positions 1–189 (MLYKGDTLYL…KVGLVDAVVK (189 aa)) are enoyl-CoA hydratase/isomerase. Substrate is bound at residue Asp-296. Residues 311 to 729 (ETPKQAAVLG…AQPVGELQTA (419 aa)) form a 3-hydroxyacyl-CoA dehydrogenase region. NAD(+) contacts are provided by residues Met-324, Asp-343, 400-402 (VVE), Lys-407, and Ser-429. The For 3-hydroxyacyl-CoA dehydrogenase activity role is filled by His-450. Residue Asn-453 coordinates NAD(+). Substrate is bound by residues Asn-500 and Tyr-660. Residues 708 to 729 (SHNAPYYPQVEPAQPVGELQTA) form a disordered region.

It in the N-terminal section; belongs to the enoyl-CoA hydratase/isomerase family. The protein in the C-terminal section; belongs to the 3-hydroxyacyl-CoA dehydrogenase family. As to quaternary structure, heterotetramer of two alpha chains (FadB) and two beta chains (FadA).

It catalyses the reaction a (3S)-3-hydroxyacyl-CoA + NAD(+) = a 3-oxoacyl-CoA + NADH + H(+). The catalysed reaction is a (3S)-3-hydroxyacyl-CoA = a (2E)-enoyl-CoA + H2O. The enzyme catalyses a 4-saturated-(3S)-3-hydroxyacyl-CoA = a (3E)-enoyl-CoA + H2O. It carries out the reaction (3S)-3-hydroxybutanoyl-CoA = (3R)-3-hydroxybutanoyl-CoA. It catalyses the reaction a (3Z)-enoyl-CoA = a 4-saturated (2E)-enoyl-CoA. The catalysed reaction is a (3E)-enoyl-CoA = a 4-saturated (2E)-enoyl-CoA. The protein operates within lipid metabolism; fatty acid beta-oxidation. Functionally, involved in the aerobic and anaerobic degradation of long-chain fatty acids via beta-oxidation cycle. Catalyzes the formation of 3-oxoacyl-CoA from enoyl-CoA via L-3-hydroxyacyl-CoA. It can also use D-3-hydroxyacyl-CoA and cis-3-enoyl-CoA as substrate. The protein is Fatty acid oxidation complex subunit alpha of Cronobacter sakazakii (strain ATCC BAA-894) (Enterobacter sakazakii).